Here is a 633-residue protein sequence, read N- to C-terminus: Threonine--tRNA ligase (633 aa).

Residues 1–61 form the TGS domain; the sequence is MINVYFSDNS…TEDCKFEVIT (61 aa). Positions 242 to 533 are catalytic; it reads DHRKIGKELE…LIEHHSGKLP (292 aa). 3 residues coordinate Zn(2+): Cys333, His384, and His510.

It belongs to the class-II aminoacyl-tRNA synthetase family. As to quaternary structure, homodimer. It depends on Zn(2+) as a cofactor.

It is found in the cytoplasm. It carries out the reaction tRNA(Thr) + L-threonine + ATP = L-threonyl-tRNA(Thr) + AMP + diphosphate + H(+). Catalyzes the attachment of threonine to tRNA(Thr) in a two-step reaction: L-threonine is first activated by ATP to form Thr-AMP and then transferred to the acceptor end of tRNA(Thr). Also edits incorrectly charged L-seryl-tRNA(Thr). The polypeptide is Threonine--tRNA ligase (Ehrlichia ruminantium (strain Gardel)).